Consider the following 222-residue polypeptide: uncharacterized protein (222 aa).

Glycine 2 carries the N-myristoyl glycine; by host lipid modification.

The protein belongs to the mimivirus R683/R861 family.

This is an uncharacterized protein from Acanthamoeba polyphaga mimivirus (APMV).